Here is a 423-residue protein sequence, read N- to C-terminus: AP-1 complex subunit mu-2 (423 aa).

An MHD domain is found at Lys-168–Arg-421.

This sequence belongs to the adaptor complexes medium subunit family. As to quaternary structure, adaptor protein complex 1 (AP-1) is a heterotetramer composed of two large adaptins (gamma-type subunit AP1G1 and beta-type subunit AP1B1), a medium adaptin (mu-type subunit AP1M1 or AP1M2) and a small adaptin (sigma-type subunit AP1S1 or AP1S2 or AP1S3). Interacts with P2X4. In terms of processing, phosphorylation of membrane-bound AP1M1/AP1M2 increases its affinity for sorting signals.

It localises to the cytoplasmic vesicle. Its subcellular location is the clathrin-coated vesicle membrane. It is found in the golgi apparatus. Its function is as follows. Subunit of clathrin-associated adaptor protein complex 1 that plays a role in protein sorting in the trans-Golgi network (TGN) and endosomes. The AP complexes mediate the recruitment of clathrin to membranes and the recognition of sorting signals within the cytosolic tails of transmembrane cargo molecules. This chain is AP-1 complex subunit mu-2, found in Bos taurus (Bovine).